Consider the following 430-residue polypeptide: C4-dicarboxylate transport protein (430 aa).

The next 8 helical transmembrane spans lie at 9–29 (VLYVQVIFAIIVGVILGHFYP), 45–65 (LIKMVIGPIIFCTVVTGIAGM), 79–99 (LLYFEIVSTFALLLGLAATHL), 149–169 (GEILQILLIALLFGSVLAHLG), 185–205 (VLFGIVHIVTKLAPIGAFGAM), 223–243 (LIGTFYLTSVVFVLVVLGAIA), 308–328 (IYMTMAVLFIAQATNIELTWM), and 356–376 (AATLAVVPTIPLSGMVLILGI).

This sequence belongs to the dicarboxylate/amino acid:cation symporter (DAACS) (TC 2.A.23) family.

It is found in the cell inner membrane. Functionally, responsible for the transport of dicarboxylates such as succinate, fumarate, and malate from the periplasm across the membrane. This Burkholderia orbicola (strain MC0-3) protein is C4-dicarboxylate transport protein.